The chain runs to 419 residues: Ubiquitin-like modifier-activating enzyme 5 (419 aa).

Positions 18–47 are disordered; the sequence is NRLGNVKKDHPLESSSNSKPTHQPKSPAPY. The span at 30-41 shows a compositional bias: polar residues; it reads ESSSNSKPTHQP. ATP-binding residues include G94, D115, K138, N161, and N194. Zn(2+)-binding residues include C236 and C239. C260 serves as the catalytic Glycyl thioester intermediate. C313 and C318 together coordinate Zn(2+).

It belongs to the ubiquitin-activating E1 family. UBA5 subfamily. Interacts with ufc-1. As to expression, expressed in the intestine.

E1-like enzyme which activates ufm-1. Required for interaction between ufm-1 and ufc-1. The sequence is that of Ubiquitin-like modifier-activating enzyme 5 from Caenorhabditis elegans.